Here is a 73-residue protein sequence, read N- to C-terminus: Antitoxin VapB20 (73 aa).

Its function is as follows. Antitoxin component of a type II toxin-antitoxin (TA) system. Upon expression in E.coli neutralizes the toxic effect of cognate toxin VapC20. The chain is Antitoxin VapB20 (vapB20) from Mycobacterium tuberculosis (strain ATCC 25618 / H37Rv).